The primary structure comprises 1501 residues: Opaque-specific ABC transporter CDR3 (1501 aa).

Topologically, residues 1–502 (MAKTSQAEGQ…KRYWDRMRGD (502 aa)) are cytoplasmic. The tract at residues 58–87 (TYTTATMHPNGINPISDKTDPTLDPESPSF) is disordered. Residues 140 to 395 (KYARNIFNKF…FKKMGFVCQD (256 aa)) form the ABC transporter 1 domain. Residues 503–523 (IIVPLSTVAGNIAMALILSSV) traverse the membrane as a helical segment. A glycan (N-linked (GlcNAc...) asparagine) is linked at Asn-530. 5 consecutive transmembrane segments (helical) span residues 540 to 560 (VMYY…YNMY), 589 to 609 (FPLK…MVNF), 614 to 634 (GAFF…SHLF), 653 to 673 (LLLF…YMLG), and 755 to 775 (FGVL…FVQT). Residues 776-1175 (NKSSISKGET…LFQQYWRTPS (400 aa)) lie on the Cytoplasmic side of the membrane. Residues 840 to 1083 (FHWRNLTYTV…LIEYFERNGA (244 aa)) form the ABC transporter 2 domain. Residue 876–883 (GASGAGKT) participates in ATP binding. The next 7 membrane-spanning stretches (helical) occupy residues 1176–1196 (YIYS…FTYY), 1212–1232 (IFSM…LFVT), 1261–1281 (IPYQ…PVGL), 1297–1317 (LMWL…QFCI), 1325–1345 (YAAN…GVIA), 1353–1375 (FWVF…SIGL), and 1451–1471 (GIFI…YWLF).

It belongs to the ABC transporter superfamily. ABCG family. PDR (TC 3.A.1.205) subfamily.

It localises to the membrane. This is Opaque-specific ABC transporter CDR3 (CDR3) from Candida albicans (Yeast).